A 452-amino-acid chain; its full sequence is Keratin, type I cytoskeletal 42 (452 aa).

A head region spans residues Thr4–Ser93. 2 coiled-coil regions span residues Ser93–Lys132 and Asn188–Thr407. The segment at Glu94–Trp129 is coil 1A. Positions Glu94–Leu405 constitute an IF rod domain. Residues Tyr130–Thr147 form a linker 1 region. A coil 1B region spans residues Ile148 to Leu239. The linker 12 stretch occupies residues Arg240–Ile262. A coil 2 region spans residues Leu263–Glu401. Positions Asp402–His452 are tail.

This sequence belongs to the intermediate filament family. Heterodimer of a type I and a type II keratin. Colocalizes with KRT8/KRT18 filament network.

It localises to the cytoplasm. The polypeptide is Keratin, type I cytoskeletal 42 (Rattus norvegicus (Rat)).